The sequence spans 672 residues: tRNA 5-methylaminomethyl-2-thiouridine biosynthesis bifunctional protein MnmC (672 aa).

The tract at residues 1-243 is tRNA (mnm(5)s(2)U34)-methyltransferase; the sequence is MTSITHAELG…KREMIAGCME (243 aa). An FAD-dependent cmnm(5)s(2)U34 oxidoreductase region spans residues 269–672; it reads IGGGIASAAL…LRKGKAITEL (404 aa).

It in the N-terminal section; belongs to the methyltransferase superfamily. tRNA (mnm(5)s(2)U34)-methyltransferase family. This sequence in the C-terminal section; belongs to the DAO family. FAD is required as a cofactor.

The protein resides in the cytoplasm. The enzyme catalyses 5-aminomethyl-2-thiouridine(34) in tRNA + S-adenosyl-L-methionine = 5-methylaminomethyl-2-thiouridine(34) in tRNA + S-adenosyl-L-homocysteine + H(+). In terms of biological role, catalyzes the last two steps in the biosynthesis of 5-methylaminomethyl-2-thiouridine (mnm(5)s(2)U) at the wobble position (U34) in tRNA. Catalyzes the FAD-dependent demodification of cmnm(5)s(2)U34 to nm(5)s(2)U34, followed by the transfer of a methyl group from S-adenosyl-L-methionine to nm(5)s(2)U34, to form mnm(5)s(2)U34. The protein is tRNA 5-methylaminomethyl-2-thiouridine biosynthesis bifunctional protein MnmC of Vibrio vulnificus (strain YJ016).